The primary structure comprises 243 residues: R-spondin-2 (243 aa).

The N-terminal stretch at 1–23 (MRFCLFSFALIILNCMDYSQCQG) is a signal peptide. Disulfide bonds link Cys-40–Cys-46, Cys-43–Cys-52, Cys-55–Cys-74, Cys-78–Cys-93, Cys-96–Cys-104, Cys-101–Cys-110, Cys-113–Cys-124, Cys-128–Cys-141, Cys-145–Cys-187, Cys-156–Cys-163, and Cys-196–Cys-203. The stretch at 90–134 (MNRCARCRIENCDSCFSKDFCTKCKVGFYLHRGRCFDECPDGFAP) is one FU repeat. Residues 144 to 204 (GCEVGHWSEW…RCKMAMRHCP (61 aa)) form the TSP type-1 domain. Asn-160 is a glycosylation site (N-linked (GlcNAc...) asparagine). Basic residues predominate over residues 204-224 (PGGKRTPKAKEKRNKKKRRKL). Residues 204–243 (PGGKRTPKAKEKRNKKKRRKLIERAQEQHSVFLATDRVNQ) are disordered.

This sequence belongs to the R-spondin family. As to quaternary structure, interacts with WNT1. Binds heparin. Interacts with LGR4, LGR5 and LGR6.

It localises to the secreted. Functionally, activator of the canonical Wnt signaling pathway by acting as a ligand for LGR4-6 receptors. Upon binding to LGR4-6 (LGR4, LGR5 or LGR6), LGR4-6 associate with phosphorylated LRP6 and frizzled receptors that are activated by extracellular Wnt receptors, triggering the canonical Wnt signaling pathway to increase expression of target genes. Also regulates the canonical Wnt/beta-catenin-dependent pathway and non-canonical Wnt signaling by acting as an inhibitor of ZNRF3, an important regulator of the Wnt signaling pathway. Probably also acts as a ligand for frizzled and LRP receptors. During embryonic development, plays a crucial role in limb specification, amplifying the Wnt signaling pathway independently of LGR4-6 receptors, possibly by acting as a direct antagonistic ligand to RNF43 and ZNRF3, hence governing the number of limbs an embryo should form. This chain is R-spondin-2 (Rspo2), found in Mus musculus (Mouse).